A 2515-amino-acid chain; its full sequence is Probable maltase-glucoamylase 2 (2515 aa).

The Cytoplasmic segment spans residues 1 to 9 (MARKLSVLE). Residues 10 to 30 (VLLIIFCLIVVTIDILLLLLV) traverse the membrane as a helical segment. Topologically, residues 31–482 (LEETSDTSFT…DGVWIEMNEV (452 aa)) are lumenal. The 48-residue stretch at 41–88 (PECPEIPQSERIDCTPDQEVTEDICRWQYKCCWSPVADANVPRCFFPW) folds into the P-type 1 domain. 3 disulfides stabilise this stretch: Cys-43-Cys-72, Cys-54-Cys-71, and Cys-65-Cys-84. The tract at residues 152–865 (SHENINLVDG…MDKQPANFIV (714 aa)) is maltase. A glycan (N-linked (GlcNAc...) asparagine) is linked at Asn-167. Tyr-371 carries the sulfotyrosine modification. Asn-421 carries an N-linked (GlcNAc...) asparagine glycan. The Nucleophile role is filled by Glu-478. Glu-481 is an active-site residue. Intrachain disulfides connect Cys-608/Cys-619, Cys-916/Cys-933, and Cys-928/Cys-946. Residue Asn-613 is glycosylated (N-linked (GlcNAc...) asparagine). One can recognise a P-type 2 domain in the interval 904–950 (WNLPVSDLEKFNCYPDDPTASEESCRQRGCLWEDTSTPGVPTCYYDT). The segment at 1023–1766 (PLNTPPQPVG…GVNTYVTQVS (744 aa)) is glucoamylase. Residue Tyr-1238 is modified to Sulfotyrosine. Asp-1375 acts as the Nucleophile in catalysis. Glu-1378 is an active-site residue. 3 disordered regions span residues 1816-1901 (TPTK…PITT), 1994-2015 (STTV…STNA), and 2037-2091 (TVPD…SSTT). The segment covering 1817–1831 (PTKTSTIPMSSHPSP) has biased composition (polar residues). The span at 1832–1901 (STTNATSSET…STNATVPITT (70 aa)) shows a compositional bias: low complexity. Asn-2249 carries an N-linked (GlcNAc...) asparagine glycan.

It belongs to the glycosyl hydrolase 31 family.

Its subcellular location is the membrane. It catalyses the reaction Hydrolysis of terminal (1-&gt;4)-linked alpha-D-glucose residues successively from non-reducing ends of the chains with release of beta-D-glucose.. The sequence is that of Probable maltase-glucoamylase 2 from Homo sapiens (Human).